The following is a 368-amino-acid chain: NAD(P)H-quinone oxidoreductase subunit 1, chloroplastic (368 aa).

9 helical membrane-spanning segments follow: residues 11–31 (RVIN…LIWI), 33–53 (IYIL…VWLE), 98–118 (WLFS…YLVI), 131–151 (IGVF…LMAG), 177–197 (LALC…VDIV), 205–225 (FWGW…ISSL), 255–275 (FGLF…FVTI), 305–325 (VLGI…FLFI), and 348–368 (FLLP…LLLL).

The protein belongs to the complex I subunit 1 family. NDH is composed of at least 16 different subunits, 5 of which are encoded in the nucleus.

The protein resides in the plastid. The protein localises to the chloroplast thylakoid membrane. The enzyme catalyses a plastoquinone + NADH + (n+1) H(+)(in) = a plastoquinol + NAD(+) + n H(+)(out). The catalysed reaction is a plastoquinone + NADPH + (n+1) H(+)(in) = a plastoquinol + NADP(+) + n H(+)(out). Its function is as follows. NDH shuttles electrons from NAD(P)H:plastoquinone, via FMN and iron-sulfur (Fe-S) centers, to quinones in the photosynthetic chain and possibly in a chloroplast respiratory chain. The immediate electron acceptor for the enzyme in this species is believed to be plastoquinone. Couples the redox reaction to proton translocation, and thus conserves the redox energy in a proton gradient. The chain is NAD(P)H-quinone oxidoreductase subunit 1, chloroplastic from Cycas taitungensis (Prince sago).